We begin with the raw amino-acid sequence, 62 residues long: Large ribosomal subunit protein bL33 (62 aa).

Belongs to the bacterial ribosomal protein bL33 family.

The sequence is that of Large ribosomal subunit protein bL33 from Trichodesmium erythraeum (strain IMS101).